A 411-amino-acid polypeptide reads, in one-letter code: Putative competence-damage inducible protein (411 aa).

It belongs to the CinA family.

The protein is Putative competence-damage inducible protein of Alkaliphilus metalliredigens (strain QYMF).